The sequence spans 398 residues: Phosphoglycerate kinase (398 aa).

Substrate-binding positions include 21 to 23, Arg-36, 59 to 62, Arg-119, and Arg-157; these read DFN and HLGR. ATP contacts are provided by residues Lys-208, Gly-296, Glu-327, and 354–357; that span reads GGDS.

Belongs to the phosphoglycerate kinase family. In terms of assembly, monomer.

The protein resides in the cytoplasm. The enzyme catalyses (2R)-3-phosphoglycerate + ATP = (2R)-3-phospho-glyceroyl phosphate + ADP. The protein operates within carbohydrate degradation; glycolysis; pyruvate from D-glyceraldehyde 3-phosphate: step 2/5. The sequence is that of Phosphoglycerate kinase from Streptococcus pneumoniae (strain 70585).